The chain runs to 254 residues: Bacteriorhodopsin-I (254 aa).

A propeptide spanning residues 1–6 is cleaved from the precursor; it reads MSQLAL. Residue Q7 is modified to Pyrrolidone carboxylic acid. 7 consecutive transmembrane segments (helical) span residues 16–36, 51–71, 91–111, 116–136, 144–164, 185–205, and 212–232; these read EGIW…YFIA, VITI…FFGF, YADW…LAGA, IGAL…ATLT, AFWT…VAVF, IILV…EGLA, and ETLL…FILL. K224 carries the N6-(retinylidene)lysine modification.

Belongs to the archaeal/bacterial/fungal opsin family. Post-translationally, the covalent binding of retinal to the apoprotein, bacterioopsin, generates bacteriorhodopsin.

It localises to the cell membrane. Light-driven proton pump. This is Bacteriorhodopsin-I (bop1) from Haloquadratum walsbyi (strain DSM 16854 / JCM 12705 / C23).